The following is a 93-amino-acid chain: Putative septation protein SpoVG (93 aa).

This sequence belongs to the SpoVG family.

In terms of biological role, could be involved in septation. In Lachnoclostridium phytofermentans (strain ATCC 700394 / DSM 18823 / ISDg) (Clostridium phytofermentans), this protein is Putative septation protein SpoVG.